The chain runs to 76 residues: Large ribosomal subunit protein uL24 (76 aa).

This sequence belongs to the universal ribosomal protein uL24 family. As to quaternary structure, part of the 50S ribosomal subunit.

Its function is as follows. One of two assembly initiator proteins, it binds directly to the 5'-end of the 23S rRNA, where it nucleates assembly of the 50S subunit. In terms of biological role, one of the proteins that surrounds the polypeptide exit tunnel on the outside of the subunit. The sequence is that of Large ribosomal subunit protein uL24 from Campylobacter hominis (strain ATCC BAA-381 / DSM 21671 / CCUG 45161 / LMG 19568 / NCTC 13146 / CH001A).